Consider the following 703-residue polypeptide: Pinin (703 aa).

At Ala2 the chain carries N-acetylalanine. Residues 2 to 32 adopt a coiled-coil conformation; that stretch reads AVAVRTLQEQLEKAKESLKNVDENIRKLTGR. The segment at 46–148 is disordered; that stretch reads ALSGPGGGRG…ETPERPGPIF (103 aa). Residue Ser48 is modified to Phosphoserine. Arg54 is subject to Omega-N-methylarginine. A phosphoserine mark is found at Ser58, Ser66, Ser96, and Ser100. Over residues 87-100 the composition is skewed to basic and acidic residues; the sequence is GGERRTRRESRQES. Lys109 is covalently cross-linked (Glycyl lysine isopeptide (Lys-Gly) (interchain with G-Cter in SUMO2)). A phosphoserine mark is found at Ser114 and Ser115. A Glycyl lysine isopeptide (Lys-Gly) (interchain with G-Cter in SUMO2) cross-link involves residue Lys121. A Phosphothreonine modification is found at Thr125. Glycyl lysine isopeptide (Lys-Gly) (interchain with G-Cter in SUMO2) cross-links involve residues Lys138 and Lys157. Lys159 participates in a covalent cross-link: Glycyl lysine isopeptide (Lys-Gly) (interchain with G-Cter in SUMO1); alternate. A Glycyl lysine isopeptide (Lys-Gly) (interchain with G-Cter in SUMO2); alternate cross-link involves residue Lys159. Residues 165-236 adopt a coiled-coil conformation; sequence ATERQKRRQE…HNAKIIKYIR (72 aa). Residues 223 to 285 form a sufficient for PSAP complex assembly region; it reads EWNEHNAKII…AEQINKMEAR (63 aa). A Glycyl lysine isopeptide (Lys-Gly) (interchain with G-Cter in SUMO2) cross-link involves residue Lys230. Lys240 is modified (N6-acetyllysine; alternate). Residue Lys240 is modified to N6-succinyllysine; alternate. Residues Lys281, Lys306, and Lys313 each participate in a glycyl lysine isopeptide (Lys-Gly) (interchain with G-Cter in SUMO2) cross-link. Disordered stretches follow at residues 284–314, 331–394, and 408–703; these read ARPRRQSMKEKEHQVVVRNEEQKSEQEEGKV, RVGT…EEVM, and AEQE…PGQL. Basic and acidic residues-rich tracts occupy residues 348 to 357 and 366 to 386; these read EIPIVHSDAE and KQEMEVKMEEETEVRESEKQQ. Ser354 carries the phosphoserine modification. The stretch at 354-411 forms a coiled coil; the sequence is SDAEKEQEEEEQKQEMEVKMEEETEVRESEKQQDSQPEEVMDVLEMVESVKNVIAEQE. Glycyl lysine isopeptide (Lys-Gly) (interchain with G-Cter in SUMO2) cross-links involve residues Lys366 and Lys372. 2 positions are modified to phosphoserine: Ser382 and Ser388. Over residues 417–433 the composition is skewed to basic and acidic residues; it reads QVERVEPSENEASKELE. Residues Ser450 and Ser457 each carry the phosphoserine modification. A compositionally biased stretch (low complexity) spans 479–489; that stretch reads PMAQPQAQSLP. Glycyl lysine isopeptide (Lys-Gly) (interchain with G-Cter in SUMO2) cross-links involve residues Lys541 and Lys549. Ser565 is subject to Phosphoserine. Lys566 is covalently cross-linked (Glycyl lysine isopeptide (Lys-Gly) (interchain with G-Cter in SUMO2)). Residues 572–588 show a composition bias toward basic residues; sequence RSRSRGRARNRTSKSRS. Low complexity predominate over residues 589-642; the sequence is RSSSSSSSSSSSTSSSSGSSSSSGSSSSRTSSSSSSTSGSSSRDSSSSTTSSSE. Positions 646–664 are enriched in basic residues; it reads RSRGRGHNRDRKHRRSVDR. A compositionally biased stretch (basic and acidic residues) spans 665-676; the sequence is KRRDASGLERSH. A phosphoserine mark is found at Ser670 and Ser691.

Belongs to the pinin family. In terms of assembly, found in a mRNA splicing-dependent exon junction complex (EJC). Found in a complex with SR proteins. Found in a mRNP complex with RNPS1. Component of the PSAP complex consisting of RNPS1, SAP18 and PNN. Interacts with PNISR, CTBP1, CTBP2, KRT8, KRT18, KRT19, PS1D/PNO40, PPIG, RNPS1, SFRS4 and SRRM2. Identified in the spliceosome C complex.

The protein resides in the nucleus speckle. The protein localises to the cell junction. Its subcellular location is the desmosome. Its function is as follows. Transcriptional activator binding to the E-box 1 core sequence of the E-cadherin promoter gene; the core-binding sequence is 5'CAGGTG-3'. Capable of reversing CTBP1-mediated transcription repression. Auxiliary component of the splicing-dependent multiprotein exon junction complex (EJC) deposited at splice junction on mRNAs. The EJC is a dynamic structure consisting of core proteins and several peripheral nuclear and cytoplasmic associated factors that join the complex only transiently either during EJC assembly or during subsequent mRNA metabolism. Participates in the regulation of alternative pre-mRNA splicing. Associates to spliced mRNA within 60 nt upstream of the 5'-splice sites. Component of the PSAP complex which binds RNA in a sequence-independent manner and is proposed to be recruited to the EJC prior to or during the splicing process and to regulate specific excision of introns in specific transcription subsets. Involved in the establishment and maintenance of epithelia cell-cell adhesion. The sequence is that of Pinin (PNN) from Bos taurus (Bovine).